The chain runs to 364 residues: Anionic peroxidase (364 aa).

An N-terminal signal peptide occupies residues 1 to 20 (MASFMKQLSLVLSFIALALA). Positions 21 to 66 (GCAVYQNTQTAMKDQLKVTPTWLDNTLKSTNLLSLGLGKPSGGKLG) are excised as a propeptide. H99 (proton acceptor) is an active-site residue. Positions 100, 103, 105, and 107 each coordinate Ca(2+). A disulfide bond links C101 and C106. N113, N188, N202, and N216 each carry an N-linked (GlcNAc...) asparagine glycan. Disulfide bonds link C155-C343 and C234-C255. H227 serves as a coordination point for heme b. T228 is a Ca(2+) binding site. N254 and N260 each carry an N-linked (GlcNAc...) asparagine glycan. Positions 268, 270, and 275 each coordinate Ca(2+). N-linked (GlcNAc...) asparagine glycosylation is present at N299.

The protein belongs to the peroxidase family. Classical plant (class III) peroxidase subfamily. Requires Ca(2+) as cofactor. It depends on heme b as a cofactor. As to expression, highly expressed in suspension cultured cells and calli. Weak expression also found in the stems of intact plants. No expression in leaf, tuberous root and non-tuberous root.

The protein localises to the secreted. It catalyses the reaction 2 a phenolic donor + H2O2 = 2 a phenolic radical donor + 2 H2O. Removal of H(2)O(2), oxidation of toxic reductants, biosynthesis and degradation of lignin, suberization, auxin catabolism, response to environmental stresses such as wounding, pathogen attack and oxidative stress. These functions might be dependent on each isozyme/isoform in each plant tissue. In terms of biological role, may contribute to protection against cold-induced oxidative stress. The chain is Anionic peroxidase from Ipomoea batatas (Sweet potato).